A 120-amino-acid chain; its full sequence is Putative cysteine proteinase inhibitor 11 (120 aa).

The signal sequence occupies residues 1–24 (MARHPGLLLILLAAVAAVATTSRA). The Secondary area of contact motif lies at 73-77 (QVVQG).

It belongs to the cystatin family. Phytocystatin subfamily.

Its subcellular location is the secreted. In terms of biological role, specific inhibitor of cysteine proteinases. Probably involved in the regulation of endogenous processes and in defense against pests and pathogens. In Oryza sativa subsp. japonica (Rice), this protein is Putative cysteine proteinase inhibitor 11.